The following is a 333-amino-acid chain: Casein kinase II subunit alpha-3 (333 aa).

In terms of domain architecture, Protein kinase spans 34–319 (YEVVRKVGRG…AREAMDHPYF (286 aa)). ATP is bound by residues 40–48 (VGRGKYSEV) and Lys-63. Asp-151 serves as the catalytic Proton acceptor.

The protein belongs to the protein kinase superfamily. Ser/Thr protein kinase family. CK2 subfamily. Heterotetramer of two catalytic alpha subunits and two regulatory beta subunits.

It localises to the nucleus. It is found in the nucleolus. The protein resides in the cytoplasm. It carries out the reaction L-seryl-[protein] + ATP = O-phospho-L-seryl-[protein] + ADP + H(+). It catalyses the reaction L-threonyl-[protein] + ATP = O-phospho-L-threonyl-[protein] + ADP + H(+). Its function is as follows. Casein kinases are operationally defined by their preferential utilization of acidic proteins such as caseins as substrates. The alpha chain contains the catalytic site. The tetrameric holoenzyme CK2 is composed of two alpha and two beta subunits. Acts as a circadian clock component that maintains the correct period length through phosphorylation of CCA1. This chain is Casein kinase II subunit alpha-3, found in Arabidopsis thaliana (Mouse-ear cress).